We begin with the raw amino-acid sequence, 321 residues long: Large ribosomal subunit protein uL3 (321 aa).

Belongs to the universal ribosomal protein uL3 family. In terms of assembly, part of the 50S ribosomal subunit. Forms a cluster with proteins L14 and L24e.

Functionally, one of the primary rRNA binding proteins, it binds directly near the 3'-end of the 23S rRNA, where it nucleates assembly of the 50S subunit. The polypeptide is Large ribosomal subunit protein uL3 (Nanoarchaeum equitans (strain Kin4-M)).